The following is a 118-amino-acid chain: Large ribosomal subunit protein bL20 (118 aa).

It belongs to the bacterial ribosomal protein bL20 family.

Functionally, binds directly to 23S ribosomal RNA and is necessary for the in vitro assembly process of the 50S ribosomal subunit. It is not involved in the protein synthesizing functions of that subunit. The protein is Large ribosomal subunit protein bL20 of Ectopseudomonas mendocina (strain ymp) (Pseudomonas mendocina).